A 306-amino-acid polypeptide reads, in one-letter code: Aspartate carbamoyltransferase catalytic subunit (306 aa).

Positions 56 and 57 each coordinate carbamoyl phosphate. An L-aspartate-binding site is contributed by lysine 84. Arginine 106, histidine 134, and glutamine 137 together coordinate carbamoyl phosphate. Arginine 167 and arginine 221 together coordinate L-aspartate. Residues glycine 262 and proline 263 each contribute to the carbamoyl phosphate site.

It belongs to the aspartate/ornithine carbamoyltransferase superfamily. ATCase family. Heterododecamer (2C3:3R2) of six catalytic PyrB chains organized as two trimers (C3), and six regulatory PyrI chains organized as three dimers (R2).

It catalyses the reaction carbamoyl phosphate + L-aspartate = N-carbamoyl-L-aspartate + phosphate + H(+). The protein operates within pyrimidine metabolism; UMP biosynthesis via de novo pathway; (S)-dihydroorotate from bicarbonate: step 2/3. Its function is as follows. Catalyzes the condensation of carbamoyl phosphate and aspartate to form carbamoyl aspartate and inorganic phosphate, the committed step in the de novo pyrimidine nucleotide biosynthesis pathway. In Desulforudis audaxviator (strain MP104C), this protein is Aspartate carbamoyltransferase catalytic subunit.